The chain runs to 130 residues: Small ribosomal subunit protein uS9 (130 aa).

Residues Leu98–Arg130 form a disordered region. Over residues Lys111–Arg130 the composition is skewed to basic residues.

This sequence belongs to the universal ribosomal protein uS9 family.

The chain is Small ribosomal subunit protein uS9 from Staphylococcus haemolyticus (strain JCSC1435).